The primary structure comprises 201 residues: Glutathione peroxidase 1 (201 aa).

A Phosphoserine modification is found at serine 32. The active site involves selenocysteine 47. Selenocysteine 47 is a non-standard amino acid (selenocysteine). An N6-acetyllysine; alternate mark is found at lysine 86, lysine 112, and lysine 146. Residues lysine 86, lysine 112, and lysine 146 each carry the N6-succinyllysine; alternate modification. 2 positions are modified to phosphoserine: serine 195 and serine 199.

Belongs to the glutathione peroxidase family. Homotetramer. Interacts with MIEN1. In terms of processing, during periods of oxidative stress, Sec-47 may react with a superoxide radical, irreversibly lose hydroselenide and be converted to dehydroalanine.

The protein resides in the cytoplasm. The protein localises to the mitochondrion. The catalysed reaction is 2 glutathione + H2O2 = glutathione disulfide + 2 H2O. It carries out the reaction a hydroperoxy polyunsaturated fatty acid + 2 glutathione = a hydroxy polyunsaturated fatty acid + glutathione disulfide + H2O. It catalyses the reaction tert-butyl hydroperoxide + 2 glutathione = tert-butanol + glutathione disulfide + H2O. The enzyme catalyses cumene hydroperoxide + 2 glutathione = 2-phenylpropan-2-ol + glutathione disulfide + H2O. The catalysed reaction is (13S)-hydroperoxy-(9Z,11E)-octadecadienoate + 2 glutathione = (13S)-hydroxy-(9Z,11E)-octadecadienoate + glutathione disulfide + H2O. It carries out the reaction (9S)-hydroperoxy-(10E,12Z)-octadecadienoate + 2 glutathione = (9S)-hydroxy-(10E,12Z)-octadecadienoate + glutathione disulfide + H2O. It catalyses the reaction (5S)-hydroperoxy-(6E,8Z,11Z,14Z)-eicosatetraenoate + 2 glutathione = (5S)-hydroxy-(6E,8Z,11Z,14Z)-eicosatetraenoate + glutathione disulfide + H2O. The enzyme catalyses (12S)-hydroperoxy-(5Z,8Z,10E,14Z)-eicosatetraenoate + 2 glutathione = (12S)-hydroxy-(5Z,8Z,10E,14Z)-eicosatetraenoate + glutathione disulfide + H2O. The catalysed reaction is (12R)-hydroperoxy-(5Z,8Z,10E,14Z)-eicosatetraenoate + 2 glutathione = (12R)-hydroxy-(5Z,8Z,10E,14Z)-eicosatetraenoate + glutathione disulfide + H2O. It carries out the reaction (15S)-hydroperoxy-(5Z,8Z,11Z,13E)-eicosatetraenoate + 2 glutathione = (15S)-hydroxy-(5Z,8Z,11Z,13E)-eicosatetraenoate + glutathione disulfide + H2O. It catalyses the reaction (5S)-hydroperoxy-(6E,8Z,11Z,14Z,17Z)-eicosapentaenoate + 2 glutathione = (5S)-hydroxy-(6E,8Z,11Z,14Z,17Z)-eicosapentaenoate + glutathione disulfide + H2O. The enzyme catalyses (12S)-hydroperoxy-(5Z,8Z,10E,14Z,17Z)-eicosapentaenoate + 2 glutathione = (12S)-hydroxy-(5Z,8Z,10E,14Z,17Z)-eicosapentaenoate + glutathione disulfide + H2O. The catalysed reaction is (15S)-hydroperoxy-(5Z,8Z,11Z,13E,17Z)-eicosapentaenoate + 2 glutathione = (15S)-hydroxy-(5Z,8Z,11Z,13E,17Z)-eicosapentaenoate + glutathione disulfide + H2O. It carries out the reaction (15S)-hydroperoxy-(11Z,13E)-eicosadienoate + 2 glutathione = (15S)-hydroxy-(11Z,13E)-eicosadienoate + glutathione disulfide + H2O. It catalyses the reaction (17S)-hydroperoxy-(4Z,7Z,10Z,13Z,15E,19Z)-docosahexaenoate + 2 glutathione = (17S)-hydroxy-(4Z,7Z,10Z,13Z,15E,19Z)-docosahexaenoate + glutathione disulfide + H2O. Its function is as follows. Catalyzes the reduction of hydroperoxides in a glutathione-dependent manner thus regulating cellular redox homeostasis. Can reduce small soluble hydroperoxides such as H2O2, cumene hydroperoxide and tert-butyl hydroperoxide, as well as several fatty acid-derived hydroperoxides. In platelets catalyzes the reduction of 12-hydroperoxyeicosatetraenoic acid, the primary product of the arachidonate 12-lipoxygenase pathway. The chain is Glutathione peroxidase 1 (GPX1) from Macaca fuscata fuscata (Japanese macaque).